A 308-amino-acid chain; its full sequence is Glutaminase (308 aa).

Substrate is bound by residues Ser-66, Asn-117, Glu-161, Asn-168, Tyr-192, Tyr-244, and Val-262.

This sequence belongs to the glutaminase family. Homotetramer.

The enzyme catalyses L-glutamine + H2O = L-glutamate + NH4(+). In Salmonella heidelberg (strain SL476), this protein is Glutaminase.